The sequence spans 214 residues: Oxaloacetate tautomerase fahd-1, mitochondrial (214 aa).

Mg(2+)-binding residues include Glu65, Glu67, and Asp96.

It belongs to the FAH family. Mg(2+) is required as a cofactor. Mn(2+) serves as cofactor. In terms of tissue distribution, widely expressed.

The protein localises to the mitochondrion. The catalysed reaction is oxaloacetate = enol-oxaloacetate. In terms of biological role, tautomerase that converts enol-oxaloacetate, a strong inhibitor of succinate dehydrogenase, to the physiological keto form of oxaloacetate. The protein is Oxaloacetate tautomerase fahd-1, mitochondrial of Caenorhabditis elegans.